Here is a 281-residue protein sequence, read N- to C-terminus: Streptomycin biosynthesis protein StrF (281 aa).

It functions in the pathway antibiotic biosynthesis; streptomycin biosynthesis. Its function is as follows. May be involved in the formation of N-methyl-L-glucosamine. The chain is Streptomycin biosynthesis protein StrF (strF) from Streptomyces griseus.